The chain runs to 141 residues: Nucleoside diphosphate kinase (141 aa).

ATP-binding residues include Lys11, Phe59, Arg87, Thr93, Arg104, and Asn114. The Pros-phosphohistidine intermediate role is filled by His117.

It belongs to the NDK family. In terms of assembly, homotetramer. Mg(2+) serves as cofactor.

It is found in the cytoplasm. It catalyses the reaction a 2'-deoxyribonucleoside 5'-diphosphate + ATP = a 2'-deoxyribonucleoside 5'-triphosphate + ADP. The enzyme catalyses a ribonucleoside 5'-diphosphate + ATP = a ribonucleoside 5'-triphosphate + ADP. Major role in the synthesis of nucleoside triphosphates other than ATP. The ATP gamma phosphate is transferred to the NDP beta phosphate via a ping-pong mechanism, using a phosphorylated active-site intermediate. The protein is Nucleoside diphosphate kinase of Haemophilus influenzae (strain 86-028NP).